Consider the following 536-residue polypeptide: CTP synthase (536 aa).

The interval 1-267 (MSKFVFVTGG…CKETLNYLEL (267 aa)) is amidoligase domain. Position 13 (S13) interacts with CTP. Residue S13 coordinates UTP. Residues 14 to 19 (SIGKGI) and D71 contribute to the ATP site. Mg(2+) contacts are provided by D71 and E141. Residues 148 to 150 (DIE), 188 to 193 (KTKPTQ), and K224 contribute to the CTP site. Residues 188–193 (KTKPTQ) and K224 each bind UTP. The region spanning 292–534 (KVALVGKYIE…IKASQDKLTQ (243 aa)) is the Glutamine amidotransferase type-1 domain. G354 contacts L-glutamine. Residue C381 is the Nucleophile; for glutamine hydrolysis of the active site. Residues 382 to 385 (LGMQ), E405, and R462 contribute to the L-glutamine site. Residues H507 and E509 contribute to the active site.

Belongs to the CTP synthase family. In terms of assembly, homotetramer.

It catalyses the reaction UTP + L-glutamine + ATP + H2O = CTP + L-glutamate + ADP + phosphate + 2 H(+). The catalysed reaction is L-glutamine + H2O = L-glutamate + NH4(+). The enzyme catalyses UTP + NH4(+) + ATP = CTP + ADP + phosphate + 2 H(+). It participates in pyrimidine metabolism; CTP biosynthesis via de novo pathway; CTP from UDP: step 2/2. Its activity is regulated as follows. Allosterically activated by GTP, when glutamine is the substrate; GTP has no effect on the reaction when ammonia is the substrate. The allosteric effector GTP functions by stabilizing the protein conformation that binds the tetrahedral intermediate(s) formed during glutamine hydrolysis. Inhibited by the product CTP, via allosteric rather than competitive inhibition. In terms of biological role, catalyzes the ATP-dependent amination of UTP to CTP with either L-glutamine or ammonia as the source of nitrogen. Regulates intracellular CTP levels through interactions with the four ribonucleotide triphosphates. The protein is CTP synthase of Prochlorococcus marinus (strain MIT 9301).